Here is a 90-residue protein sequence, read N- to C-terminus: Small ribosomal subunit protein bS20 (90 aa).

The segment at 1–25 (MANSPSAKKRAKQAEKRRSHNASLR) is disordered. Residues 7 to 20 (AKKRAKQAEKRRSH) show a composition bias toward basic residues.

Belongs to the bacterial ribosomal protein bS20 family.

Its function is as follows. Binds directly to 16S ribosomal RNA. The chain is Small ribosomal subunit protein bS20 from Pseudomonas fluorescens (strain Pf0-1).